The following is a 383-amino-acid chain: Protein arginine N-methyltransferase PRMT10 (383 aa).

A disordered region spans residues Met1–Ser23. Positions Gly8–Pro22 are enriched in gly residues. The region spanning Glu29–Glu360 is the SAM-dependent MTase PRMT-type domain. S-adenosyl-L-methionine contacts are provided by Gln45, Arg54, Gly78, Glu100, and Glu129. Residues Glu143 and Glu152 contribute to the active site. The segment at Asp190–Glu230 is dimerization arm.

The protein belongs to the class I-like SAM-binding methyltransferase superfamily. Protein arginine N-methyltransferase family. Ring-like homodimer.

It carries out the reaction L-arginyl-[protein] + 2 S-adenosyl-L-methionine = N(omega),N(omega)-dimethyl-L-arginyl-[protein] + 2 S-adenosyl-L-homocysteine + 2 H(+). Methylates (mono and asymmetric dimethylation) the guanidino nitrogens of arginyl residues in some proteins. Essential for regulating flowering time. This chain is Protein arginine N-methyltransferase PRMT10 (PRMT10), found in Arabidopsis thaliana (Mouse-ear cress).